We begin with the raw amino-acid sequence, 576 residues long: Sulfite reductase [NADPH] hemoprotein beta-component (576 aa).

The segment covering 1 to 12 (MDAKTQPDRSRD) has biased composition (basic and acidic residues). The tract at residues 1 to 26 (MDAKTQPDRSRDVSQPLDKLGPDETL) is disordered. [4Fe-4S] cluster contacts are provided by cysteine 441, cysteine 447, cysteine 486, and cysteine 490. Cysteine 490 provides a ligand contact to siroheme.

This sequence belongs to the nitrite and sulfite reductase 4Fe-4S domain family. Alpha(8)-beta(8). The alpha component is a flavoprotein, the beta component is a hemoprotein. Requires siroheme as cofactor. [4Fe-4S] cluster is required as a cofactor.

The catalysed reaction is hydrogen sulfide + 3 NADP(+) + 3 H2O = sulfite + 3 NADPH + 4 H(+). The protein operates within sulfur metabolism; hydrogen sulfide biosynthesis; hydrogen sulfide from sulfite (NADPH route): step 1/1. Its function is as follows. Component of the sulfite reductase complex that catalyzes the 6-electron reduction of sulfite to sulfide. This is one of several activities required for the biosynthesis of L-cysteine from sulfate. The polypeptide is Sulfite reductase [NADPH] hemoprotein beta-component (Nitrobacter winogradskyi (strain ATCC 25391 / DSM 10237 / CIP 104748 / NCIMB 11846 / Nb-255)).